Reading from the N-terminus, the 237-residue chain is Uridylate kinase (237 aa).

An ATP-binding site is contributed by 12-15 (KLSG). The segment at 20 to 25 (GDEGFG) is involved in allosteric activation by GTP. Gly-54 contributes to the UMP binding site. ATP-binding residues include Gly-55 and Arg-59. Residues Asp-74 and 135 to 142 (TGSPFFTT) contribute to the UMP site. ATP is bound by residues Thr-162, Tyr-168, and Asp-171.

The protein belongs to the UMP kinase family. Homohexamer.

Its subcellular location is the cytoplasm. It catalyses the reaction UMP + ATP = UDP + ADP. It participates in pyrimidine metabolism; CTP biosynthesis via de novo pathway; UDP from UMP (UMPK route): step 1/1. With respect to regulation, allosterically activated by GTP. Inhibited by UTP. Functionally, catalyzes the reversible phosphorylation of UMP to UDP. This is Uridylate kinase from Actinobacillus pleuropneumoniae serotype 5b (strain L20).